A 167-amino-acid polypeptide reads, in one-letter code: I-Kappa-B like protein F2 (167 aa).

3 ANK repeats span residues 54–86 (HGKQ…DING), 91–121 (FGNT…NMGI), and 125–154 (LFKT…RCGV).

It belongs to the polydnaviridae I-Kappa-B-like protein family.

In terms of biological role, suppresses the host immune response through NF-kappa-B inactivation. Possesses ankyrin repeat domains required for NF-kappa-B binding but lacks the regulatory regions required for dissociation from NF-kappa-B and degradation. Therefore, prevents host NF-kappa-B release and subsequent activation. The sequence is that of I-Kappa-B like protein F2 (F3) from Microplitis demolitor bracovirus (isolate Webb) (MdBV).